The following is a 354-amino-acid chain: DNA polymerase IV (354 aa).

One can recognise a UmuC domain in the interval 6 to 187 (IIHVDCDCFY…LPVARLHGVG (182 aa)). Aspartate 10 and aspartate 105 together coordinate Mg(2+). Glutamate 106 is an active-site residue.

It belongs to the DNA polymerase type-Y family. As to quaternary structure, monomer. The cofactor is Mg(2+).

It localises to the cytoplasm. It carries out the reaction DNA(n) + a 2'-deoxyribonucleoside 5'-triphosphate = DNA(n+1) + diphosphate. Poorly processive, error-prone DNA polymerase involved in untargeted mutagenesis. Copies undamaged DNA at stalled replication forks, which arise in vivo from mismatched or misaligned primer ends. These misaligned primers can be extended by PolIV. Exhibits no 3'-5' exonuclease (proofreading) activity. May be involved in translesional synthesis, in conjunction with the beta clamp from PolIII. This chain is DNA polymerase IV, found in Pseudomonas putida (strain ATCC 47054 / DSM 6125 / CFBP 8728 / NCIMB 11950 / KT2440).